The chain runs to 112 residues: MSDVSLKLSAKDIYEKDFEKTMARGYRREEVDAFLDDIITDYQKMADMNNEVVKLSEENHKLKKELEELRLRVATSRPQDNKNFSSNNSSSASNNVDILKRISNLEKAVFGK.

Residues Tyr-42–Arg-77 adopt a coiled-coil conformation. A disordered region spans residues Ala-74–Val-96. Residues Asn-81 to Asn-95 are compositionally biased toward low complexity.

Belongs to the GpsB family. In terms of assembly, forms polymers through the coiled coil domains. Interacts with PBP1, MreC and EzrA.

It localises to the cytoplasm. Divisome component that associates with the complex late in its assembly, after the Z-ring is formed, and is dependent on DivIC and PBP2B for its recruitment to the divisome. Together with EzrA, is a key component of the system that regulates PBP1 localization during cell cycle progression. Its main role could be the removal of PBP1 from the cell pole after pole maturation is completed. Also contributes to the recruitment of PBP1 to the division complex. Not essential for septum formation. The chain is Cell cycle protein GpsB from Staphylococcus epidermidis (strain ATCC 12228 / FDA PCI 1200).